We begin with the raw amino-acid sequence, 156 residues long: ATP synthase subunit b (156 aa).

A helical membrane pass occupies residues 11–31 (LIAFALFVWFCMKFVWPPIIN).

It belongs to the ATPase B chain family. In terms of assembly, F-type ATPases have 2 components, F(1) - the catalytic core - and F(0) - the membrane proton channel. F(1) has five subunits: alpha(3), beta(3), gamma(1), delta(1), epsilon(1). F(0) has three main subunits: a(1), b(2) and c(10-14). The alpha and beta chains form an alternating ring which encloses part of the gamma chain. F(1) is attached to F(0) by a central stalk formed by the gamma and epsilon chains, while a peripheral stalk is formed by the delta and b chains.

It is found in the cell inner membrane. Its function is as follows. F(1)F(0) ATP synthase produces ATP from ADP in the presence of a proton or sodium gradient. F-type ATPases consist of two structural domains, F(1) containing the extramembraneous catalytic core and F(0) containing the membrane proton channel, linked together by a central stalk and a peripheral stalk. During catalysis, ATP synthesis in the catalytic domain of F(1) is coupled via a rotary mechanism of the central stalk subunits to proton translocation. Component of the F(0) channel, it forms part of the peripheral stalk, linking F(1) to F(0). The sequence is that of ATP synthase subunit b from Haemophilus influenzae (strain PittEE).